A 144-amino-acid polypeptide reads, in one-letter code: Probable calcium-binding protein CML31 (144 aa).

4 consecutive EF-hand domains span residues 1-31 (MAEIFESVDKNKDGKILWDEFAEAIRVFSPQ), 32-67 (ITSEEIDKMFIVLDVDGDGQIDDVEFASCLMVNGGG), 72-107 (EEEVVMKEAFDLYDMDGDGKISASEIHVVLKRLGEK), and 108-143 (HTMEDCVVMVQTVDKDSDGFVNFEEFKIMMNSNKES). Ca(2+) is bound by residues Asp45, Asp47, Asp49, Gln51, Glu56, Asp85, Asp87, Asp89, Lys91, Glu96, Asp121, Asp123, Asp125, and Glu132.

Potential calcium sensor. This chain is Probable calcium-binding protein CML31 (CML31), found in Arabidopsis thaliana (Mouse-ear cress).